A 346-amino-acid polypeptide reads, in one-letter code: MADDRKAALDAALKKIEKNYGKGSIMKLGEKIDQQISTIPSGSLALDVALGIGGYPRGRIIEVYGPESSGKTTVALHAIAEVQKNGGTAAFIDAEHALDPQYAQKLGVNIDELLLSQPDTGEQGLEIADALVSSGAVDIVVIDSVAALVPRAEIDGEMGDSHVGLQARLMSQALRKLSGSINKTKTIAIFINQIREKVGVMFGNPEITPGGRALKFYATIRLEVRRAEQLKQGTDIVGNRTKIKVVKNKVAPPFKIAEVDVMYGLGISQEGELLDMAVEKDIVDKSGAWYSYKEDRIGQGRENAKIYMSNHPEMMAEVSTLVRAAYGIGEPVDVPQEAQEELPLDE.

65 to 72 (GPESSGKT) provides a ligand contact to ATP.

This sequence belongs to the RecA family.

It localises to the cytoplasm. In terms of biological role, can catalyze the hydrolysis of ATP in the presence of single-stranded DNA, the ATP-dependent uptake of single-stranded DNA by duplex DNA, and the ATP-dependent hybridization of homologous single-stranded DNAs. It interacts with LexA causing its activation and leading to its autocatalytic cleavage. The protein is Protein RecA of Enterococcus mundtii.